We begin with the raw amino-acid sequence, 207 residues long: Small ribosomal subunit protein uS4 (207 aa).

Positions 31-55 are disordered; it reads KCKLDSKPGQHGRTSGARTSDYGTQ. Residues 42 to 53 are compositionally biased toward polar residues; it reads GRTSGARTSDYG. Residues 97 to 157 form the S4 RNA-binding domain; it reads SRLDNVVYRM…EQKKKQARIL (61 aa).

It belongs to the universal ribosomal protein uS4 family. In terms of assembly, part of the 30S ribosomal subunit. Contacts protein S5. The interaction surface between S4 and S5 is involved in control of translational fidelity.

Functionally, one of the primary rRNA binding proteins, it binds directly to 16S rRNA where it nucleates assembly of the body of the 30S subunit. Its function is as follows. With S5 and S12 plays an important role in translational accuracy. The protein is Small ribosomal subunit protein uS4 of Paraburkholderia xenovorans (strain LB400).